Here is a 716-residue protein sequence, read N- to C-terminus: Fatty acid oxidation complex subunit alpha (716 aa).

The segment at 1-189 is enoyl-CoA hydratase/isomerase; that stretch reads MIYQSPTIQV…KVGAVDAVVA (189 aa). A substrate-binding site is contributed by D296. A 3-hydroxyacyl-CoA dehydrogenase region spans residues 311-716; it reads KDVKSAAVLG…AANNGSYYQA (406 aa). NAD(+) is bound by residues M324, D343, 400–402, K407, and S429; that span reads VVE. The For 3-hydroxyacyl-CoA dehydrogenase activity role is filled by H450. N453 serves as a coordination point for NAD(+). Positions 500 and 660 each coordinate substrate.

This sequence in the N-terminal section; belongs to the enoyl-CoA hydratase/isomerase family. In the C-terminal section; belongs to the 3-hydroxyacyl-CoA dehydrogenase family. In terms of assembly, heterotetramer of two alpha chains (FadB) and two beta chains (FadA).

It carries out the reaction a (3S)-3-hydroxyacyl-CoA + NAD(+) = a 3-oxoacyl-CoA + NADH + H(+). The catalysed reaction is a (3S)-3-hydroxyacyl-CoA = a (2E)-enoyl-CoA + H2O. The enzyme catalyses a 4-saturated-(3S)-3-hydroxyacyl-CoA = a (3E)-enoyl-CoA + H2O. It catalyses the reaction (3S)-3-hydroxybutanoyl-CoA = (3R)-3-hydroxybutanoyl-CoA. It carries out the reaction a (3Z)-enoyl-CoA = a 4-saturated (2E)-enoyl-CoA. The catalysed reaction is a (3E)-enoyl-CoA = a 4-saturated (2E)-enoyl-CoA. It participates in lipid metabolism; fatty acid beta-oxidation. Its function is as follows. Involved in the aerobic and anaerobic degradation of long-chain fatty acids via beta-oxidation cycle. Catalyzes the formation of 3-oxoacyl-CoA from enoyl-CoA via L-3-hydroxyacyl-CoA. It can also use D-3-hydroxyacyl-CoA and cis-3-enoyl-CoA as substrate. In Shewanella sp. (strain MR-7), this protein is Fatty acid oxidation complex subunit alpha.